A 227-amino-acid chain; its full sequence is Cytochrome c oxidase subunit 2 (227 aa).

Topologically, residues 1 to 14 (MAYPFQLGLQDATS) are mitochondrial intermembrane. Residues 15–45 (PIMEELLHFHDHTLMIVFLISSLVLYIITLM) form a helical membrane-spanning segment. Residues 46–59 (LTTKLTHTSTMDAQ) lie on the Mitochondrial matrix side of the membrane. Residues 60–87 (EVETVWTILPAIILILIALPSLRILYMM) traverse the membrane as a helical segment. Topologically, residues 88–227 (DEINNPSLTV…YFETWSAVMV (140 aa)) are mitochondrial intermembrane. Cu cation-binding residues include H161, C196, E198, C200, H204, and M207. Position 198 (E198) interacts with Mg(2+). Y218 is subject to Phosphotyrosine.

Belongs to the cytochrome c oxidase subunit 2 family. Component of the cytochrome c oxidase (complex IV, CIV), a multisubunit enzyme composed of 14 subunits. The complex is composed of a catalytic core of 3 subunits MT-CO1, MT-CO2 and MT-CO3, encoded in the mitochondrial DNA, and 11 supernumerary subunits COX4I, COX5A, COX5B, COX6A, COX6B, COX6C, COX7A, COX7B, COX7C, COX8 and NDUFA4, which are encoded in the nuclear genome. The complex exists as a monomer or a dimer and forms supercomplexes (SCs) in the inner mitochondrial membrane with NADH-ubiquinone oxidoreductase (complex I, CI) and ubiquinol-cytochrome c oxidoreductase (cytochrome b-c1 complex, complex III, CIII), resulting in different assemblies (supercomplex SCI(1)III(2)IV(1) and megacomplex MCI(2)III(2)IV(2)). Found in a complex with TMEM177, COA6, COX18, COX20, SCO1 and SCO2. Interacts with TMEM177 in a COX20-dependent manner. Interacts with COX20. Interacts with COX16. Requires Cu cation as cofactor.

The protein resides in the mitochondrion inner membrane. It catalyses the reaction 4 Fe(II)-[cytochrome c] + O2 + 8 H(+)(in) = 4 Fe(III)-[cytochrome c] + 2 H2O + 4 H(+)(out). Its function is as follows. Component of the cytochrome c oxidase, the last enzyme in the mitochondrial electron transport chain which drives oxidative phosphorylation. The respiratory chain contains 3 multisubunit complexes succinate dehydrogenase (complex II, CII), ubiquinol-cytochrome c oxidoreductase (cytochrome b-c1 complex, complex III, CIII) and cytochrome c oxidase (complex IV, CIV), that cooperate to transfer electrons derived from NADH and succinate to molecular oxygen, creating an electrochemical gradient over the inner membrane that drives transmembrane transport and the ATP synthase. Cytochrome c oxidase is the component of the respiratory chain that catalyzes the reduction of oxygen to water. Electrons originating from reduced cytochrome c in the intermembrane space (IMS) are transferred via the dinuclear copper A center (CU(A)) of subunit 2 and heme A of subunit 1 to the active site in subunit 1, a binuclear center (BNC) formed by heme A3 and copper B (CU(B)). The BNC reduces molecular oxygen to 2 water molecules using 4 electrons from cytochrome c in the IMS and 4 protons from the mitochondrial matrix. The chain is Cytochrome c oxidase subunit 2 (MT-CO2) from Vulpes vulpes (Red fox).